Consider the following 602-residue polypeptide: Elongation factor 4 (602 aa).

The region spanning 2-184 (NHIRNFSIIA…LIVAKVPAPR (183 aa)) is the tr-type G domain. GTP contacts are provided by residues 14-19 (DHGKST) and 131-134 (NKMD).

This sequence belongs to the TRAFAC class translation factor GTPase superfamily. Classic translation factor GTPase family. LepA subfamily.

Its subcellular location is the cell inner membrane. The enzyme catalyses GTP + H2O = GDP + phosphate + H(+). Functionally, required for accurate and efficient protein synthesis under certain stress conditions. May act as a fidelity factor of the translation reaction, by catalyzing a one-codon backward translocation of tRNAs on improperly translocated ribosomes. Back-translocation proceeds from a post-translocation (POST) complex to a pre-translocation (PRE) complex, thus giving elongation factor G a second chance to translocate the tRNAs correctly. Binds to ribosomes in a GTP-dependent manner. The sequence is that of Elongation factor 4 from Paracidovorax citrulli (strain AAC00-1) (Acidovorax citrulli).